A 359-amino-acid chain; its full sequence is Hsp70-binding protein 1 (359 aa).

The disordered stretch occupies residues 1-71 (MSDEGSRGSR…PPPEPMSEER (71 aa)). Positions 23–37 (SSGGGGGGSSAGGSG) are enriched in gly residues. 4 ARM repeats span residues 132-174 (ENMD…TCSQ), 177-217 (AAIQ…CLVR), 220-259 (EAGL…NLLV), and 262-301 (PEHK…SLVT). Phosphoserine occurs at positions 351 and 356.

In terms of assembly, interacts with the ATP-binding domain of HSPA1A. Detected in a ternary complex containing STUB1, HSPA1A and HSPBP1. Interacts with PGLYRP1; this interaction blocks the cytotoxic activity of the PGLYRP1-HSPA1A complex. In terms of tissue distribution, ubiquitous.

In terms of biological role, inhibits HSPA1A chaperone activity by changing the conformation of the ATP-binding domain of HSPA1A and interfering with ATP binding. Interferes with ubiquitination mediated by STUB1 and inhibits chaperone-assisted degradation of immature CFTR. In Homo sapiens (Human), this protein is Hsp70-binding protein 1.